The following is a 283-amino-acid chain: Bifunctional protein FolD (283 aa).

NADP(+) contacts are provided by residues 164 to 166 and serine 189; that span reads GRS.

This sequence belongs to the tetrahydrofolate dehydrogenase/cyclohydrolase family. As to quaternary structure, homodimer.

It carries out the reaction (6R)-5,10-methylene-5,6,7,8-tetrahydrofolate + NADP(+) = (6R)-5,10-methenyltetrahydrofolate + NADPH. It catalyses the reaction (6R)-5,10-methenyltetrahydrofolate + H2O = (6R)-10-formyltetrahydrofolate + H(+). The protein operates within one-carbon metabolism; tetrahydrofolate interconversion. In terms of biological role, catalyzes the oxidation of 5,10-methylenetetrahydrofolate to 5,10-methenyltetrahydrofolate and then the hydrolysis of 5,10-methenyltetrahydrofolate to 10-formyltetrahydrofolate. The protein is Bifunctional protein FolD of Lactobacillus acidophilus (strain ATCC 700396 / NCK56 / N2 / NCFM).